The chain runs to 931 residues: Aftiphilin (931 aa).

The tract at residues 1-49 (MEPDIIRMYSSSPPPLDNGAEDDEEDEFGEFGGFSEVSPSGVGFVDFDT) is disordered. A compositionally biased stretch (acidic residues) spans 19-29 (GAEDDEEDEFG). The WXXF motif 1 motif lies at 28–31 (FGEF). A compositionally biased stretch (low complexity) spans 33-45 (GFSEVSPSGVGFV). Residue Ser-151 is modified to Phosphoserine. The span at 371-381 (SVKTSDVNEIG) shows a compositional bias: polar residues. The disordered stretch occupies residues 371 to 454 (SVKTSDVNEI…PFVTSTQDSM (84 aa)). A Phosphoserine modification is found at Ser-395. Positions 433–436 (FGDF) match the WXXF motif 2 motif. Residues 439 to 454 (ANGTTPPFVTSTQDSM) show a composition bias toward polar residues. The short motif at 476–479 (FGEF) is the WXXF motif 3 element. 2 disordered regions span residues 494–561 (TESD…SSAG) and 599–636 (WQSQRTDETMGTLGTPKMHSVSSAASKGAVASGHLQEP). Residues 516-530 (GGKDSKPDSKLKNGQ) are compositionally biased toward basic and acidic residues. Phosphothreonine is present on Thr-613. A compositionally biased stretch (low complexity) spans 618–631 (SVSSAASKGAVASG). Positions 712–714 (YQW) match the CLTCL1/Clathrin-binding motif. The clathrin-binding stretch occupies residues 821 to 825 (LLNLD).

As to quaternary structure, self-associates. Interacts with GGA1 (via GAE domain). Interacts with GGA3 (via GAE domain), AP1G1 (via GAE domain) and AP1G2 (via GAE domain). Component of the aftiphilin/p200/gamma-synergin complex, at least composed of AFTPH/aftiphilin, HEATR5B/p200a and SYNRG/gamma-synergin, which plays a role in the AP1G1/AP-1-mediated protein trafficking from early to recycling endosomes. Within the complex interacts with HEATR5B/p200a and SYNRG/gamma-synergin; the interactions are direct. Interacts with AP1G1/AP-1; the interaction is required to recruit AFTPH/aftiphilin to the perinuclear region of the cell. Interacts with CLTCL1/Clathrin.

It localises to the cytoplasm. It is found in the perinuclear region. The protein resides in the cytoplasmic vesicle. Its subcellular location is the clathrin-coated vesicle. Functionally, component of clathrin-coated vesicles. Component of the aftiphilin/p200/gamma-synergin complex, which plays roles in AP1G1/AP-1-mediated protein trafficking including the trafficking of transferrin from early to recycling endosomes, and the membrane trafficking of furin and the lysosomal enzyme cathepsin D between the trans-Golgi network (TGN) and endosomes. In Mus musculus (Mouse), this protein is Aftiphilin (Aftph).